A 542-amino-acid polypeptide reads, in one-letter code: Tripartite motif-containing protein 26 (542 aa).

The RING-type zinc-finger motif lies at 16 to 57 (CSICLDYLRDPVTIDCGHVFCRSCTSDIRPISGNRPVCPLCK). The B box-type zinc finger occupies 97 to 138 (QDMKLCERHQEKLHYYCEDDGKLLCVMCRESREHRPHTAVLV). Residues Cys-102, His-105, Cys-124, and His-130 each coordinate Zn(2+). A coiled-coil region spans residues 197-243 (QFLKKREQHLLDQLATLEQLLTEGREKFKTRGVSELDRLTLVISELE). The 245-residue stretch at 298–542 (RGLRQFQGKL…WPEARLLLRP (245 aa)) folds into the B30.2/SPRY domain. Residues 379–440 (REGWSEDEEE…EEEEEVQESC (62 aa)) are disordered. Acidic residues-rich tracts occupy residues 383-405 (SEDEEEGEEEEEGEEEEEDEEPG) and 413-437 (WETDEEDESLGEEEEEEEEEEEEVQ). The stretch at 411–440 (EDWETDEEDESLGEEEEEEEEEEEEVQESC) forms a coiled coil.

It belongs to the TRIM/RBCC family. As to quaternary structure, interacts with TBK1; this interaction bridges together TBK1 and NEMO in order to activate TBK1. Interacts with INCA1. Post-translationally, autoubiquitinates upon viral infection. In turn, autoubiquitinated TRIM26 recruits NEMO and bridges TBK1-NEMO interaction.

Its subcellular location is the cytoplasm. The protein localises to the nucleus. It carries out the reaction S-ubiquitinyl-[E2 ubiquitin-conjugating enzyme]-L-cysteine + [acceptor protein]-L-lysine = [E2 ubiquitin-conjugating enzyme]-L-cysteine + N(6)-ubiquitinyl-[acceptor protein]-L-lysine.. E3 ubiquitin-protein ligase which regulates the IFN-beta production and antiviral response downstream of various DNA-encoded pattern-recognition receptors (PRRs). Also plays a central role in determining the response to different forms of oxidative stress by controlling levels of DNA glycosylases NEIL1, NEIL3 and NTH1 that are involved in repair of damaged DNA. Promotes nuclear IRF3 ubiquitination and proteasomal degradation. Bridges together TBK1 and NEMO during the innate response to viral infection leading to the activation of TBK1. Positively regulates LPS-mediated inflammatory innate immune response by catalyzing the 'Lys-11'-linked polyubiquitination of TAB1 to enhance its activation and subsequent NF-kappa-B and MAPK signaling. In a manner independent of its catalytic activity, inhibits WWP2, a SOX2-directed E3 ubiquitin ligase, and thus protects SOX2 from polyubiquitination and proteasomal degradation. Ubiquitinates the histone acetyltransferase protein complex component PHF20 and thereby triggers its degradation in the nucleus after its recruitment by the histone demethylase KDM6B, serving as a scaffold protein. Upon induction by TGF-beta, ubiquitinates the TFIID component TAF7 for proteasomal degradation. Induces ferroptosis by ubiquitinating SLC7A11, a critical protein for lipid reactive oxygen species (ROS) scavenging. The protein is Tripartite motif-containing protein 26 (Trim26) of Rattus norvegicus (Rat).